A 612-amino-acid polypeptide reads, in one-letter code: Dihydroxy-acid dehydratase (612 aa).

Aspartate 81 lines the Mg(2+) pocket. Residue cysteine 122 participates in [2Fe-2S] cluster binding. Mg(2+) contacts are provided by aspartate 123 and lysine 124. Position 124 is an N6-carboxylysine (lysine 124). Cysteine 193 provides a ligand contact to [2Fe-2S] cluster. Glutamate 489 provides a ligand contact to Mg(2+). Catalysis depends on serine 515, which acts as the Proton acceptor.

It belongs to the IlvD/Edd family. In terms of assembly, homodimer. [2Fe-2S] cluster is required as a cofactor. It depends on Mg(2+) as a cofactor.

The enzyme catalyses (2R)-2,3-dihydroxy-3-methylbutanoate = 3-methyl-2-oxobutanoate + H2O. The catalysed reaction is (2R,3R)-2,3-dihydroxy-3-methylpentanoate = (S)-3-methyl-2-oxopentanoate + H2O. It participates in amino-acid biosynthesis; L-isoleucine biosynthesis; L-isoleucine from 2-oxobutanoate: step 3/4. It functions in the pathway amino-acid biosynthesis; L-valine biosynthesis; L-valine from pyruvate: step 3/4. In terms of biological role, functions in the biosynthesis of branched-chain amino acids. Catalyzes the dehydration of (2R,3R)-2,3-dihydroxy-3-methylpentanoate (2,3-dihydroxy-3-methylvalerate) into 2-oxo-3-methylpentanoate (2-oxo-3-methylvalerate) and of (2R)-2,3-dihydroxy-3-methylbutanoate (2,3-dihydroxyisovalerate) into 2-oxo-3-methylbutanoate (2-oxoisovalerate), the penultimate precursor to L-isoleucine and L-valine, respectively. This is Dihydroxy-acid dehydratase from Stutzerimonas stutzeri (strain A1501) (Pseudomonas stutzeri).